Reading from the N-terminus, the 352-residue chain is UDP-N-acetylglucosamine--N-acetylmuramyl-(pentapeptide) pyrophosphoryl-undecaprenol N-acetylglucosamine transferase (352 aa).

Residues serine 195 and glutamine 287 each coordinate UDP-N-acetyl-alpha-D-glucosamine.

This sequence belongs to the glycosyltransferase 28 family. MurG subfamily.

It localises to the cell membrane. The enzyme catalyses Mur2Ac(oyl-L-Ala-gamma-D-Glu-L-Lys-D-Ala-D-Ala)-di-trans,octa-cis-undecaprenyl diphosphate + UDP-N-acetyl-alpha-D-glucosamine = beta-D-GlcNAc-(1-&gt;4)-Mur2Ac(oyl-L-Ala-gamma-D-Glu-L-Lys-D-Ala-D-Ala)-di-trans,octa-cis-undecaprenyl diphosphate + UDP + H(+). It functions in the pathway cell wall biogenesis; peptidoglycan biosynthesis. In terms of biological role, cell wall formation. Catalyzes the transfer of a GlcNAc subunit on undecaprenyl-pyrophosphoryl-MurNAc-pentapeptide (lipid intermediate I) to form undecaprenyl-pyrophosphoryl-MurNAc-(pentapeptide)GlcNAc (lipid intermediate II). This chain is UDP-N-acetylglucosamine--N-acetylmuramyl-(pentapeptide) pyrophosphoryl-undecaprenol N-acetylglucosamine transferase, found in Streptococcus pneumoniae (strain CGSP14).